A 321-amino-acid chain; its full sequence is Transmembrane and ubiquitin-like domain-containing protein 2 (321 aa).

Residues 36–56 (VMVVAGVVVLILALVLAWLST) form a helical membrane-spanning segment. Disordered regions lie at residues 87 to 131 (LVAG…GGVE) and 145 to 170 (KRQA…LPPS). Positions 104–120 (EGNDEKAEEAGEGRGDS) are enriched in basic and acidic residues. Positions 174–247 (ITVRLKFLND…IHCHRSPPGS (74 aa)) constitute a Ubiquitin-like domain. 2 helical membrane-spanning segments follow: residues 266–286 (LGVN…GVVW) and 295–315 (FFTA…SFLV).

It is found in the membrane. The sequence is that of Transmembrane and ubiquitin-like domain-containing protein 2 (TMUB2) from Homo sapiens (Human).